Reading from the N-terminus, the 228-residue chain is MNKISTKKAICILSGGMDSTLSSYIAKKDGFEIIAVHFNYGQRTQNRELKAFRDICNELDIKSKYEIDIPFFTQIGANALTDMSIDVPTGGLEAGVPITYVPFRNGIFLAITAAIAEKEGATAMYIGVVQEDSSGYPDCTEEFIQDMKKAINQGTKEDTKIEIITPLVHLSKAQIVQEAIKLNVPLELTWSCYKEEEEACGVCDSCRLRLNGFEQAGKKDPIKYKEFQ.

13-23 (LSGGMDSTLSS) contacts ATP. Residues Cys192, Cys200, Cys203, and Cys206 each coordinate Zn(2+).

It belongs to the QueC family. It depends on Zn(2+) as a cofactor.

It catalyses the reaction 7-carboxy-7-deazaguanine + NH4(+) + ATP = 7-cyano-7-deazaguanine + ADP + phosphate + H2O + H(+). It participates in purine metabolism; 7-cyano-7-deazaguanine biosynthesis. In terms of biological role, catalyzes the ATP-dependent conversion of 7-carboxy-7-deazaguanine (CDG) to 7-cyano-7-deazaguanine (preQ(0)). This Aliarcobacter butzleri (strain RM4018) (Arcobacter butzleri) protein is 7-cyano-7-deazaguanine synthase.